Here is a 203-residue protein sequence, read N- to C-terminus: Large ribosomal subunit protein uL18 (203 aa).

Belongs to the universal ribosomal protein uL18 family. Part of the 50S ribosomal subunit. Contacts the 5S and 23S rRNAs.

Its function is as follows. This is one of the proteins that bind and probably mediate the attachment of the 5S RNA into the large ribosomal subunit, where it forms part of the central protuberance. In Pyrococcus horikoshii (strain ATCC 700860 / DSM 12428 / JCM 9974 / NBRC 100139 / OT-3), this protein is Large ribosomal subunit protein uL18.